A 213-amino-acid polypeptide reads, in one-letter code: Superoxide dismutase [Fe] (213 aa).

Fe cation is bound by residues H26, H73, D156, and H160.

The protein belongs to the iron/manganese superoxide dismutase family. Homodimer. Requires Fe cation as cofactor.

The catalysed reaction is 2 superoxide + 2 H(+) = H2O2 + O2. In terms of biological role, destroys superoxide anion radicals which are normally produced within the cells and which are toxic to biological systems. The sequence is that of Superoxide dismutase [Fe] (sodB) from Helicobacter pylori (strain ATCC 700392 / 26695) (Campylobacter pylori).